The chain runs to 362 residues: Probable secreted beta-glucosidase UTH1 (362 aa).

A signal peptide spans 1–17; that stretch reads MKLSALLALSASTAVLA.

Belongs to the SUN family.

It is found in the mitochondrion outer membrane. The protein resides in the secreted. Its subcellular location is the cell wall. In terms of biological role, involved in aging, oxidative stress response, and in the regulation of mitochondrial biogenesis. Inactivation of UTH1 increases life span, leads to higher resistance to heat stress and to hydrogen peroxide, and increases sensitivity to the superoxide radical-generating drug paraquat and to copper. Also required for the selective autophagic degradation of mitochondria (mitophagy) in response to nitrogen starvation. Involved in the remodeling of the cell wall during the various phases of yeast culture development and under various environmental conditions and plays a role in septation. Involved in cell sensitivity to boric acid. This Saccharomyces cerevisiae (strain RM11-1a) (Baker's yeast) protein is Probable secreted beta-glucosidase UTH1 (UTH1).